A 113-amino-acid chain; its full sequence is MTDTHSIAQPFEAEVSPANNRQLTVSYAGRYPDYSRIPAITLKGQWLEVAGFATGTAVDVKVMEGCIVLTAQPPAAEEGELMQSLRQVCKLSARKQKQVQEFIGVIAGKQKVA.

Residues 29-74 (GRYPDYSRIPAITLKGQWLEVAGFATGTAVDVKVMEGCIVLTAQPP) form the SpoVT-AbrB domain.

It belongs to the SymE family.

The protein resides in the cytoplasm. Functionally, involved in the degradation and recycling of damaged RNA. It is itself a target for degradation by the ATP-dependent protease Lon. The polypeptide is Endoribonuclease SymE (Escherichia coli O7:K1 (strain IAI39 / ExPEC)).